Reading from the N-terminus, the 427-residue chain is Serine--tRNA ligase (427 aa).

233-235 (TAE) contacts L-serine. 264–266 (RSE) contacts ATP. E287 provides a ligand contact to L-serine. Residue 351–354 (EISS) participates in ATP binding. Residue S386 participates in L-serine binding.

The protein belongs to the class-II aminoacyl-tRNA synthetase family. Type-1 seryl-tRNA synthetase subfamily. As to quaternary structure, homodimer. The tRNA molecule binds across the dimer.

It is found in the cytoplasm. The catalysed reaction is tRNA(Ser) + L-serine + ATP = L-seryl-tRNA(Ser) + AMP + diphosphate + H(+). It carries out the reaction tRNA(Sec) + L-serine + ATP = L-seryl-tRNA(Sec) + AMP + diphosphate + H(+). It functions in the pathway aminoacyl-tRNA biosynthesis; selenocysteinyl-tRNA(Sec) biosynthesis; L-seryl-tRNA(Sec) from L-serine and tRNA(Sec): step 1/1. Functionally, catalyzes the attachment of serine to tRNA(Ser). Is also able to aminoacylate tRNA(Sec) with serine, to form the misacylated tRNA L-seryl-tRNA(Sec), which will be further converted into selenocysteinyl-tRNA(Sec). The chain is Serine--tRNA ligase from Thiobacillus denitrificans (strain ATCC 25259 / T1).